A 575-amino-acid polypeptide reads, in one-letter code: Sulfite reductase [NADPH] hemoprotein beta-component (575 aa).

C438, C444, C484, and C488 together coordinate [4Fe-4S] cluster. C488 contacts siroheme.

The protein belongs to the nitrite and sulfite reductase 4Fe-4S domain family. Alpha(8)-beta(8). The alpha component is a flavoprotein, the beta component is a hemoprotein. It depends on siroheme as a cofactor. [4Fe-4S] cluster is required as a cofactor.

It catalyses the reaction hydrogen sulfide + 3 NADP(+) + 3 H2O = sulfite + 3 NADPH + 4 H(+). It participates in sulfur metabolism; hydrogen sulfide biosynthesis; hydrogen sulfide from sulfite (NADPH route): step 1/1. In terms of biological role, component of the sulfite reductase complex that catalyzes the 6-electron reduction of sulfite to sulfide. This is one of several activities required for the biosynthesis of L-cysteine from sulfate. This chain is Sulfite reductase [NADPH] hemoprotein beta-component, found in Vibrio atlanticus (strain LGP32) (Vibrio splendidus (strain Mel32)).